The primary structure comprises 128 residues: Adrenodoxin (128 aa).

S3 carries the post-translational modification Phosphoserine. K6 is subject to N6-acetyllysine; alternate. At K6 the chain carries N6-succinyllysine; alternate. The 2Fe-2S ferredoxin-type domain maps to 7 to 111; that stretch reads VTVNFINRDG…NMTVRVPDAV (105 aa). C46, C52, C55, and C92 together coordinate [2Fe-2S] cluster. K98 carries the post-translational modification N6-succinyllysine. S117 is modified (phosphoserine).

The protein belongs to the adrenodoxin/putidaredoxin family. Interacts with CYP11A1. Requires [2Fe-2S] cluster as cofactor.

It localises to the mitochondrion matrix. Essential for the synthesis of various steroid hormones. Participates in the reduction of mitochondrial cytochrome P450 for steroidogenesis. Transfers electrons from adrenodoxin reductase to CYP11A1, a cytochrome P450 that catalyzes cholesterol side-chain cleavage. Does not form a ternary complex with adrenodoxin reductase and CYP11A1 but shuttles between the two enzymes to transfer electrons. This is Adrenodoxin (FDX1) from Ovis aries (Sheep).